The chain runs to 311 residues: Malate dehydrogenase (311 aa).

NAD(+)-binding positions include 7–13 (GAAGGIG) and Asp34. The substrate site is built by Arg81 and Arg87. NAD(+) is bound by residues Asn94 and 117–119 (ITN). Asn119 and Arg153 together coordinate substrate. Catalysis depends on His177, which acts as the Proton acceptor. An NAD(+)-binding site is contributed by Met227.

The protein belongs to the LDH/MDH superfamily. MDH type 1 family. Homodimer.

It carries out the reaction (S)-malate + NAD(+) = oxaloacetate + NADH + H(+). In terms of biological role, catalyzes the reversible oxidation of malate to oxaloacetate. This is Malate dehydrogenase from Shewanella sp. (strain MR-4).